The primary structure comprises 231 residues: SrfA-induced gene F protein (231 aa).

This Dictyostelium discoideum (Social amoeba) protein is SrfA-induced gene F protein (sigF).